The chain runs to 358 residues: Protein RecA (358 aa).

Glycine 69–threonine 76 contacts ATP.

Belongs to the RecA family.

Its subcellular location is the cytoplasm. In terms of biological role, can catalyze the hydrolysis of ATP in the presence of single-stranded DNA, the ATP-dependent uptake of single-stranded DNA by duplex DNA, and the ATP-dependent hybridization of homologous single-stranded DNAs. It interacts with LexA causing its activation and leading to its autocatalytic cleavage. This chain is Protein RecA, found in Trichormus variabilis (strain ATCC 29413 / PCC 7937) (Anabaena variabilis).